Reading from the N-terminus, the 253-residue chain is Phosphoribosylaminoimidazole-succinocarboxamide synthase (253 aa).

Belongs to the SAICAR synthetase family.

It carries out the reaction 5-amino-1-(5-phospho-D-ribosyl)imidazole-4-carboxylate + L-aspartate + ATP = (2S)-2-[5-amino-1-(5-phospho-beta-D-ribosyl)imidazole-4-carboxamido]succinate + ADP + phosphate + 2 H(+). It participates in purine metabolism; IMP biosynthesis via de novo pathway; 5-amino-1-(5-phospho-D-ribosyl)imidazole-4-carboxamide from 5-amino-1-(5-phospho-D-ribosyl)imidazole-4-carboxylate: step 1/2. The polypeptide is Phosphoribosylaminoimidazole-succinocarboxamide synthase (Roseobacter denitrificans (strain ATCC 33942 / OCh 114) (Erythrobacter sp. (strain OCh 114))).